The chain runs to 459 residues: Cysteine--tRNA ligase (459 aa).

Zn(2+) is bound at residue Cys27. The short motif at 29 to 39 (PTVYNFVHIGN) is the 'HIGH' region element. Zn(2+) is bound by residues Cys211, His236, and Glu240. Residues 269–273 (KMSKS) carry the 'KMSKS' region motif. An ATP-binding site is contributed by Lys272.

It belongs to the class-I aminoacyl-tRNA synthetase family. As to quaternary structure, monomer. Zn(2+) serves as cofactor.

The protein resides in the cytoplasm. The enzyme catalyses tRNA(Cys) + L-cysteine + ATP = L-cysteinyl-tRNA(Cys) + AMP + diphosphate. This Ehrlichia canis (strain Jake) protein is Cysteine--tRNA ligase.